An 880-amino-acid polypeptide reads, in one-letter code: Valine--tRNA ligase (880 aa).

A 'HIGH' region motif is present at residues 49-59; the sequence is PNVTGRLHLGH. Residues 525–529 carry the 'KMSKS' region motif; sequence KMSKS. K528 is an ATP binding site. A coiled-coil region spans residues 809 to 879; that stretch reads LEGLINIDEE…AVQKRMAELK (71 aa).

Belongs to the class-I aminoacyl-tRNA synthetase family. ValS type 1 subfamily. As to quaternary structure, monomer.

It localises to the cytoplasm. It carries out the reaction tRNA(Val) + L-valine + ATP = L-valyl-tRNA(Val) + AMP + diphosphate. Its function is as follows. As ValRS can inadvertently accommodate and process structurally similar amino acids such as threonine, to avoid such errors, it has a 'posttransfer' editing activity that hydrolyzes mischarged Thr-tRNA(Val) in a tRNA-dependent manner. Catalyzes the attachment of valine to tRNA(Val). The sequence is that of Valine--tRNA ligase from Bacillus subtilis (strain 168).